The following is an 89-amino-acid chain: Large ribosomal subunit protein bL31B (89 aa).

It belongs to the bacterial ribosomal protein bL31 family. Type B subfamily. Part of the 50S ribosomal subunit.

This chain is Large ribosomal subunit protein bL31B, found in Corynebacterium aurimucosum (strain ATCC 700975 / DSM 44827 / CIP 107346 / CN-1) (Corynebacterium nigricans).